The chain runs to 684 residues: Chaperone protein HtpG (684 aa).

The segment at 1-329 is a; substrate-binding; sequence MSKKGTIGVT…SPDIPLNVSR (329 aa). Residues 330–548 are b; that stretch reads SYLQSDANVK…FMRRMRDMAQ (219 aa). Residues 549 to 684 form a c region; it reads LQPGMSFYGE…EFIRRSQRLL (136 aa).

This sequence belongs to the heat shock protein 90 family. Homodimer.

The protein localises to the cytoplasm. Its function is as follows. Molecular chaperone. Has ATPase activity. This Porphyromonas gingivalis (strain ATCC 33277 / DSM 20709 / CIP 103683 / JCM 12257 / NCTC 11834 / 2561) protein is Chaperone protein HtpG.